The sequence spans 328 residues: uncharacterized protein (328 aa).

The signal sequence occupies residues 1 to 32 (MFNFRLFSRRGKSLGLLAIVLLLFGFYSLKSS).

Belongs to the glycosyltransferase 34 family.

The protein localises to the endoplasmic reticulum. This is an uncharacterized protein from Schizosaccharomyces pombe (strain 972 / ATCC 24843) (Fission yeast).